Here is a 348-residue protein sequence, read N- to C-terminus: AT-hook motif nuclear-localized protein 9 (348 aa).

The disordered stretch occupies residues 18-156; it reads HRGLSGSGPP…MASVGELMPS (139 aa). Residues 31-46 are compositionally biased toward polar residues; it reads GSPQQQQGLRHLPNQN. A compositionally biased stretch (low complexity) spans 47-60; sequence SPFGSGSTGFGSPS. Positions 98–106 match the Bipartite nuclear localization signal motif; the sequence is KRKRGRPRK. A DNA-binding region (a.T hook 1) is located at residues 98–110; it reads KRKRGRPRKYGQD. The span at 112 to 131 shows a compositional bias: low complexity; sequence SVSLALSSSSVSTITPNNSN. Residues 132–144 constitute a DNA-binding region (a.T hook 2); it reads KRGRGRPPGSGKK. Positions 157-299 constitute a PPC domain; it reads SSGMSFTPHV…EEEASEVVQE (143 aa).

The protein resides in the nucleus. Its function is as follows. Transcription factor that specifically binds AT-rich DNA sequences related to the nuclear matrix attachment regions (MARs). The polypeptide is AT-hook motif nuclear-localized protein 9 (Arabidopsis thaliana (Mouse-ear cress)).